The chain runs to 450 residues: Glucose-6-phosphate isomerase (450 aa).

Glu291 serves as the catalytic Proton donor. Active-site residues include His312 and Lys426.

This sequence belongs to the GPI family.

The protein resides in the cytoplasm. It carries out the reaction alpha-D-glucose 6-phosphate = beta-D-fructose 6-phosphate. It functions in the pathway carbohydrate biosynthesis; gluconeogenesis. The protein operates within carbohydrate degradation; glycolysis; D-glyceraldehyde 3-phosphate and glycerone phosphate from D-glucose: step 2/4. In terms of biological role, catalyzes the reversible isomerization of glucose-6-phosphate to fructose-6-phosphate. In Clostridium perfringens (strain SM101 / Type A), this protein is Glucose-6-phosphate isomerase.